Reading from the N-terminus, the 273-residue chain is Large ribosomal subunit protein uL2 (273 aa).

The segment at 222 to 273 is disordered; sequence GVAMNPVDHPMGGGEGRSSGGRHPCTPWGVPTKGYRTRKSKRSDKLIVHRRK. Basic and acidic residues predominate over residues 264 to 273; it reads SDKLIVHRRK.

Belongs to the universal ribosomal protein uL2 family. As to quaternary structure, part of the 50S ribosomal subunit. Forms a bridge to the 30S subunit in the 70S ribosome.

Its function is as follows. One of the primary rRNA binding proteins. Required for association of the 30S and 50S subunits to form the 70S ribosome, for tRNA binding and peptide bond formation. It has been suggested to have peptidyltransferase activity; this is somewhat controversial. Makes several contacts with the 16S rRNA in the 70S ribosome. This is Large ribosomal subunit protein uL2 from Syntrophobacter fumaroxidans (strain DSM 10017 / MPOB).